A 407-amino-acid polypeptide reads, in one-letter code: [Pyruvate dehydrogenase (acetyl-transferring)] kinase isozyme 2, mitochondrial (407 aa).

Residues 135-364 (LEYKDTYGDD…DAVIYLKALS (230 aa)) enclose the Histidine kinase domain. Phosphotyrosine occurs at positions 215 and 216. ATP contacts are provided by residues 251 to 258 (ELFKNAMR), Asp290, 309 to 310 (ST), and 325 to 330 (GFGYGL). Lys376 bears the N6-succinyllysine mark.

This sequence belongs to the PDK/BCKDK protein kinase family. Homodimer, and heterodimer with PDK1. Interacts with the pyruvate dehydrogenase complex subunit DLAT, and is part of the multimeric pyruvate dehydrogenase complex that contains multiple copies of pyruvate dehydrogenase (E1), dihydrolipoamide acetyltransferase (DLAT, E2) and lipoamide dehydrogenase (DLD, E3). Detected in heart (at protein level).

The protein localises to the mitochondrion matrix. The catalysed reaction is L-seryl-[pyruvate dehydrogenase E1 alpha subunit] + ATP = O-phospho-L-seryl-[pyruvate dehydrogenase E1 alpha subunit] + ADP + H(+). In terms of biological role, kinase that plays a key role in the regulation of glucose and fatty acid metabolism and homeostasis via phosphorylation of the pyruvate dehydrogenase subunits PDHA1 and PDHA2. This inhibits pyruvate dehydrogenase activity, and thereby regulates metabolite flux through the tricarboxylic acid cycle, down-regulates aerobic respiration and inhibits the formation of acetyl-coenzyme A from pyruvate. Inhibition of pyruvate dehydrogenase decreases glucose utilization and increases fat metabolism. Mediates cellular responses to insulin. Plays an important role in maintaining normal blood glucose levels and in metabolic adaptation to nutrient availability. Via its regulation of pyruvate dehydrogenase activity, plays an important role in maintaining normal blood pH and in preventing the accumulation of ketone bodies under starvation. Plays a role in the regulation of cell proliferation and in resistance to apoptosis under oxidative stress. Plays a role in p53/TP53-mediated apoptosis. The polypeptide is [Pyruvate dehydrogenase (acetyl-transferring)] kinase isozyme 2, mitochondrial (Pdk2) (Mus musculus (Mouse)).